A 422-amino-acid polypeptide reads, in one-letter code: S100P-binding protein (422 aa).

Disordered stretches follow at residues 1–28 (MMCS…SWSS), 61–135 (LKDD…TPAK), and 170–292 (YVSE…DSGK). The span at 80 to 90 (DDSRNVEKGEK) shows a compositional bias: basic and acidic residues. The residue at position 195 (Ser195) is a Phosphoserine. Over residues 231 to 241 (VSDKNMSDSKK) the composition is skewed to basic and acidic residues. A compositionally biased stretch (polar residues) spans 255–269 (TPNTGSSRRNGSYKS). Positions 274–283 (KLPVSSSSSK) are enriched in low complexity.

As to quaternary structure, interacts with S100P.

Its subcellular location is the nucleus. The polypeptide is S100P-binding protein (Bos taurus (Bovine)).